The following is a 39-amino-acid chain: Ribonuclease UK114 (39 aa).

It belongs to the RutC family. As to quaternary structure, monomer. In terms of processing, the N-terminus may be blocked. As to expression, mainly expressed in the liver and kidney. Lower expression found in intestine, gizzard, glandular stomach, heart, brain and spleen.

It is found in the cytoplasm. Functionally, endoribonuclease responsible for the inhibition of the translation by cleaving mRNA. Inhibits cell-free protein synthesis. Cleaves phosphodiester bonds only in single-stranded RNA. In Gallus gallus (Chicken), this protein is Ribonuclease UK114.